We begin with the raw amino-acid sequence, 338 residues long: Ribosomal RNA small subunit methyltransferase H (338 aa).

Residues 46 to 48 (GGY), Asp-63, Phe-90, Asp-106, and Gln-113 each bind S-adenosyl-L-methionine.

It belongs to the methyltransferase superfamily. RsmH family.

It is found in the cytoplasm. The enzyme catalyses cytidine(1402) in 16S rRNA + S-adenosyl-L-methionine = N(4)-methylcytidine(1402) in 16S rRNA + S-adenosyl-L-homocysteine + H(+). Specifically methylates the N4 position of cytidine in position 1402 (C1402) of 16S rRNA. The chain is Ribosomal RNA small subunit methyltransferase H from Mesorhizobium japonicum (strain LMG 29417 / CECT 9101 / MAFF 303099) (Mesorhizobium loti (strain MAFF 303099)).